Here is a 156-residue protein sequence, read N- to C-terminus: SCP2 sterol-binding domain-containing protein 1 (156 aa).

Residues 44–156 form the SCP2 domain; sequence TVPVFEDISQ…ERVFKDWAKW (113 aa).

In Bos taurus (Bovine), this protein is SCP2 sterol-binding domain-containing protein 1 (SCP2D1).